A 413-amino-acid chain; its full sequence is Putative F-box/kelch-repeat protein At4g22430 (413 aa).

Residues 5–54 (NNTITDVLEGIVTEILVRLPLRSISRFKSVSQTWKSAIESVYFRRLFVSL) form the F-box domain. The stretch at 168–210 (NMFLNKGEMYMPLYVYSSETGFWIHKEVVCPVRLPNFYDPISL) is one Kelch repeat.

This chain is Putative F-box/kelch-repeat protein At4g22430, found in Arabidopsis thaliana (Mouse-ear cress).